Reading from the N-terminus, the 86-residue chain is uncharacterized protein (86 aa).

This is an uncharacterized protein from Schizosaccharomyces pombe (strain 972 / ATCC 24843) (Fission yeast).